A 469-amino-acid chain; its full sequence is Glutamate--tRNA ligase (469 aa).

The 'HIGH' region motif lies at 11–21 (PSPTGFIHLGN). A compositionally biased stretch (basic and acidic residues) spans 118 to 131 (GEKPRYDGTWRPEP). The disordered stretch occupies residues 118-139 (GEKPRYDGTWRPEPGKVLPEPP). The short motif at 243–247 (KMSKR) is the 'KMSKS' region element. Lys-246 is a binding site for ATP.

Belongs to the class-I aminoacyl-tRNA synthetase family. Glutamate--tRNA ligase type 1 subfamily. As to quaternary structure, monomer.

It is found in the cytoplasm. The enzyme catalyses tRNA(Glu) + L-glutamate + ATP = L-glutamyl-tRNA(Glu) + AMP + diphosphate. Functionally, catalyzes the attachment of glutamate to tRNA(Glu) in a two-step reaction: glutamate is first activated by ATP to form Glu-AMP and then transferred to the acceptor end of tRNA(Glu). The sequence is that of Glutamate--tRNA ligase from Burkholderia pseudomallei (strain 1106a).